The sequence spans 249 residues: Large ribosomal subunit protein uL4 (249 aa).

Belongs to the universal ribosomal protein uL4 family. In terms of assembly, part of the 50S ribosomal subunit.

In terms of biological role, one of the primary rRNA binding proteins, this protein initially binds near the 5'-end of the 23S rRNA. It is important during the early stages of 50S assembly. It makes multiple contacts with different domains of the 23S rRNA in the assembled 50S subunit and ribosome. Its function is as follows. Forms part of the polypeptide exit tunnel. This is Large ribosomal subunit protein uL4 from Methanoculleus marisnigri (strain ATCC 35101 / DSM 1498 / JR1).